The primary structure comprises 378 residues: DNA replication and repair protein RecF (378 aa).

31–38 (GENGSGKT) provides a ligand contact to ATP.

It belongs to the RecF family.

It is found in the cytoplasm. Its function is as follows. The RecF protein is involved in DNA metabolism; it is required for DNA replication and normal SOS inducibility. RecF binds preferentially to single-stranded, linear DNA. It also seems to bind ATP. The chain is DNA replication and repair protein RecF from Teredinibacter turnerae (strain ATCC 39867 / T7901).